The chain runs to 440 residues: Ribosomal protein uS12 methylthiotransferase RimO (440 aa).

One can recognise an MTTase N-terminal domain in the interval 2-117 (VKVGFVSLGC…LPNVIKKLYE (116 aa)). Residues Cys11, Cys47, Cys80, Cys156, Cys160, and Cys163 each coordinate [4Fe-4S] cluster. The region spanning 142 to 371 (ATPKFYAYIK…LNLQRKISLE (230 aa)) is the Radical SAM core domain. The TRAM domain maps to 374 to 440 (RKRISKKYEV…FEYDLVGEVI (67 aa)).

The protein belongs to the methylthiotransferase family. RimO subfamily. [4Fe-4S] cluster serves as cofactor.

Its subcellular location is the cytoplasm. It catalyses the reaction L-aspartate(89)-[ribosomal protein uS12]-hydrogen + (sulfur carrier)-SH + AH2 + 2 S-adenosyl-L-methionine = 3-methylsulfanyl-L-aspartate(89)-[ribosomal protein uS12]-hydrogen + (sulfur carrier)-H + 5'-deoxyadenosine + L-methionine + A + S-adenosyl-L-homocysteine + 2 H(+). Catalyzes the methylthiolation of an aspartic acid residue of ribosomal protein uS12. The polypeptide is Ribosomal protein uS12 methylthiotransferase RimO (Caldicellulosiruptor saccharolyticus (strain ATCC 43494 / DSM 8903 / Tp8T 6331)).